Consider the following 339-residue polypeptide: Purple acid phosphatase 4 (339 aa).

The first 31 residues, 1–31 (MSSKFDIGSLSIVMTLLICFLLLSLAPKLEA), serve as a signal peptide directing secretion. D53 is a binding site for Fe cation. The N-linked (GlcNAc...) asparagine glycan is linked to N61. Fe cation-binding residues include D86 and Y89. D86 is a Zn(2+) binding site. Zn(2+) contacts are provided by N124 and H218. H227 (proton donor) is an active-site residue. H253 contacts Zn(2+). A substrate-binding site is contributed by 253 to 255 (HDH). Position 255 (H255) interacts with Fe cation. A glycan (N-linked (GlcNAc...) asparagine) is linked at N284.

The protein belongs to the metallophosphoesterase superfamily. Purple acid phosphatase family. As to quaternary structure, homodimer. Fe cation is required as a cofactor. Requires Zn(2+) as cofactor. As to expression, expressed in roots, stems, leaves, flowers and siliques.

The protein localises to the secreted. The catalysed reaction is a phosphate monoester + H2O = an alcohol + phosphate. In Arabidopsis thaliana (Mouse-ear cress), this protein is Purple acid phosphatase 4 (PAP4).